The following is an 83-amino-acid chain: Salivary thrombin inhibitor anophelin (83 aa).

The N-terminal stretch at 1-22 (MANKLVLISLLCVVLVAKITQA) is a signal peptide. A disordered region spans residues 25–51 (QYAPGDEPSYDEDTDDSDKLVENDTSI). N-linked (GlcNAc...) asparagine glycosylation occurs at Asn-47. Residues 54–83 (EDYAAIEASLSETFNTAADPGRRLGEGSKP) form a sufficient for host thrombin inhibition region. Residues 56–62 (YAAIEAS) form a blocks exosite I of host thrombin region. The tract at residues 64–83 (SETFNTAADPGRRLGEGSKP) is disordered. The tract at residues 72-75 (DPGR) is blocks active site cleft of host thrombin in a reverse direction compared to substrates. Over residues 73–83 (PGRRLGEGSKP) the composition is skewed to basic and acidic residues.

It belongs to the anophelin family. Interacts with human F2 (thrombin); the interaction results in thrombin inhibition. As to expression, salivary gland (at protein level).

Its subcellular location is the secreted. Its activity is regulated as follows. Increasing concentration of NaCl decreases affinity for thrombin. Its function is as follows. Salivary protein with anticoagulant activity that inhibits host thrombin (F2); binds to the proteinase in a reverse orientation (opposite to substrates). Inhibits thrombin-induced platelet aggregation. The chain is Salivary thrombin inhibitor anophelin from Anopheles albimanus (New world malaria mosquito).